Reading from the N-terminus, the 623-residue chain is Glutamine--fructose-6-phosphate aminotransferase [isomerizing] (623 aa).

Residue Cys2 is the Nucleophile; for GATase activity of the active site. The 227-residue stretch at 2–228 (CGIVGYIGQA…NDQVVTITAD (227 aa)) folds into the Glutamine amidotransferase type-2 domain. SIS domains lie at 295-435 (IDEA…LRGN) and 468-613 (LGQD…VDQP). Lys618 serves as the catalytic For Fru-6P isomerization activity.

In terms of assembly, homodimer.

The protein resides in the cytoplasm. The enzyme catalyses D-fructose 6-phosphate + L-glutamine = D-glucosamine 6-phosphate + L-glutamate. Functionally, catalyzes the first step in hexosamine metabolism, converting fructose-6P into glucosamine-6P using glutamine as a nitrogen source. The chain is Glutamine--fructose-6-phosphate aminotransferase [isomerizing] from Corynebacterium glutamicum (strain ATCC 13032 / DSM 20300 / JCM 1318 / BCRC 11384 / CCUG 27702 / LMG 3730 / NBRC 12168 / NCIMB 10025 / NRRL B-2784 / 534).